We begin with the raw amino-acid sequence, 1158 residues long: Teashirt homolog 1 (1158 aa).

Disordered stretches follow at residues 70 to 126 (DDGR…DMDT), 170 to 228 (INST…ANNG), and 310 to 341 (TGHYRDDNKDKEEDRGKKWSKPRKRSLMEMEG). Over residues 76–88 (LSYQNSPLSNGTN) the composition is skewed to polar residues. Low complexity-rich tracts occupy residues 186-205 (SHASTIASSGASSSSNASAS) and 213-228 (SSNSTKATTLTNANNG). C2H2-type zinc fingers lie at residues 288-312 (FRCKDCSAAYDTLVGLTVHMNETGH) and 349-373 (LKCMYCGHSFESLQDLSVHMIKTKH). Residues 310–326 (TGHYRDDNKDKEEDRGK) show a composition bias toward basic and acidic residues. A disordered region spans residues 405-425 (PCSPDSISSTPGIPLAETAPT). The C2H2-type 3 zinc finger occupies 461-485 (LKCMECGSSHDTLQQLTAHMMVTGH). 3 disordered regions span residues 516-573 (PPTT…VEKS), 656-681 (LKSLTSDSSTLIHSPSSPSPPPNHKS), and 693-748 (VTGK…VDKD). The segment covering 555–573 (EEKKIKQEKEDPSERVEKS) has biased composition (basic and acidic residues). The segment covering 656 to 671 (LKSLTSDSSTLIHSPS) has biased composition (low complexity). 2 stretches are compositionally biased toward basic and acidic residues: residues 693–716 (VTGKIPSKKDRDEKLTERNSKHLT) and 724–748 (LKERKDLPKPDDLTKPTKNGTVDKD). The segment at residues 963 to 1033 (RKGRQSNWNP…NVKYQLRRTG (71 aa)) is a DNA-binding region (homeobox). C2H2-type zinc fingers lie at residues 1048-1070 (FLCSDCASQFRTPSTYINHLESH) and 1115-1138 (FQCKLCNRTFVSKHAVKLHLSKTH).

The protein belongs to the teashirt C2H2-type zinc-finger protein family.

The protein localises to the nucleus. In terms of biological role, probable transcriptional regulator involved in developmental processes. May act as a transcriptional repressor (Potential). This Danio rerio (Zebrafish) protein is Teashirt homolog 1 (tshz1).